Here is a 173-residue protein sequence, read N- to C-terminus: tRNA-specific adenosine deaminase (173 aa).

Residues 9 to 121 (EFDEKMMRYA…DYKTGAIGSR (113 aa)) form the CMP/dCMP-type deaminase domain. His-61 is a Zn(2+) binding site. The active-site Proton donor is Glu-63. Cys-91 and Cys-94 together coordinate Zn(2+).

Belongs to the cytidine and deoxycytidylate deaminase family. Homodimer. Zn(2+) is required as a cofactor.

It carries out the reaction adenosine(34) in tRNA + H2O + H(+) = inosine(34) in tRNA + NH4(+). Catalyzes the deamination of adenosine to inosine at the wobble position 34 of tRNA(Arg2). The polypeptide is tRNA-specific adenosine deaminase (Haemophilus influenzae (strain ATCC 51907 / DSM 11121 / KW20 / Rd)).